The following is a 547-amino-acid chain: Putative cysteine ligase BshC (547 aa).

Residues Asn-462–His-484 adopt a coiled-coil conformation.

Belongs to the BshC family.

Involved in bacillithiol (BSH) biosynthesis. May catalyze the last step of the pathway, the addition of cysteine to glucosamine malate (GlcN-Mal) to generate BSH. This chain is Putative cysteine ligase BshC, found in Heliobacterium modesticaldum (strain ATCC 51547 / Ice1).